Consider the following 79-residue polypeptide: Putative defensin-like protein 274 (79 aa).

The signal sequence occupies residues 1-23 (MASSRFQLVALLVVFSLVISITA). Cystine bridges form between Cys-35–Cys-76, Cys-41–Cys-64, Cys-47–Cys-74, and Cys-51–Cys-75.

Belongs to the DEFL family.

The protein resides in the secreted. The protein is Putative defensin-like protein 274 of Arabidopsis thaliana (Mouse-ear cress).